Here is a 1462-residue protein sequence, read N- to C-terminus: Serine/threonine-protein kinase HSL1 (1462 aa).

Disordered regions lie at residues 1 to 26 (MSTVVNRRSSHQFDSPSNHLDHSSSM) and 41 to 69 (RLSQISTNTNNSNKKRKTQNKIGPWKLGR). Positions 65 to 330 (WKLGRTLGRG…IDAILTHPLL (266 aa)) constitute a Protein kinase domain. ATP contacts are provided by residues 71–79 (LGRGSTGRV) and Lys-94. Asp-201 acts as the Proton acceptor in catalysis. Disordered regions lie at residues 412 to 450 (SNSFNSSNDVDSARSLPRSTSYVKTTVTDHATGEKHTTV), 471 to 540 (SAKG…TSVN), 598 to 637 (ENSKPVSKTPVSQLPPPPPPPIETPTSRTNSVKRGKTWSL), 992 to 1031 (EDEEFEDEKPFISVPSSEDDEGNTHKNKRGGLRDSGNYDF), 1095 to 1230 (KETL…QQTK), and 1269 to 1321 (NRAA…LQKE). 2 stretches are compositionally biased toward polar residues: residues 428 to 440 (PRSTSYVKTTVTD) and 471 to 487 (SAKGNVLSNITNRPNTP). Over residues 510–526 (ASRSRNASSRSLKSNSS) the composition is skewed to low complexity. Positions 527–540 (TGRNGNNASVTSVN) are enriched in polar residues. Residues 610–620 (QLPPPPPPPIE) are compositionally biased toward pro residues. The stretch at 636–715 (SLARRERELA…KLQKHQSAHD (80 aa)) forms a coiled coil. Residues 1095-1130 (KETLLKNHSSDEATIEVKEDNNEHDFNDKIKQHYDD) are compositionally biased toward basic and acidic residues. The segment covering 1131 to 1153 (NGDSEEDDEDEDEEEEDDDDDDD) has biased composition (acidic residues). 3 stretches are compositionally biased toward polar residues: residues 1165–1176 (HNYSLAEITSES), 1197–1218 (STGIFSTTQFPRSPYVVNNNGD), and 1292–1302 (NISQPLSSPTK).

Belongs to the protein kinase superfamily. CAMK Ser/Thr protein kinase family. NIM1 subfamily. Phosphorylated throughout the cell cycle, except for the G1 phase.

It localises to the bud neck. The enzyme catalyses L-seryl-[protein] + ATP = O-phospho-L-seryl-[protein] + ADP + H(+). The catalysed reaction is L-threonyl-[protein] + ATP = O-phospho-L-threonyl-[protein] + ADP + H(+). Its function is as follows. Protein kinase involved in determination of morphology during the cell cycle of both yeast-form and hyphal cells via regulation of SWE1 and CDC28. Regulates pseudohypha formation, but is not required for septin ring organization or septum formation. Plays an essential role in virulence in a mouse model. In Candida albicans (strain SC5314 / ATCC MYA-2876) (Yeast), this protein is Serine/threonine-protein kinase HSL1 (HSL1).